The primary structure comprises 82 residues: Turripeptide IX-23 (82 aa).

An N-terminal signal peptide occupies residues Met-1–Gly-23. Positions Arg-24–Pro-50 are excised as a propeptide. Disulfide bonds link Cys-53-Cys-68, Cys-58-Cys-72, and Cys-64-Cys-79.

It belongs to the Pg turripeptide superfamily. In terms of tissue distribution, expressed by the venom duct.

It is found in the secreted. In Gemmula speciosa (Splendid gem-turris), this protein is Turripeptide IX-23.